The sequence spans 299 residues: Non-structural protein V (299 aa).

2 disordered regions span residues 30-101 (QEVS…EEDT) and 128-163 (SLMV…SEGN). The segment covering 79-99 (EDQRGREDNTAPVEAKDRIEE) has biased composition (basic and acidic residues). Positions 148–160 (LDDSIEDSSEDYS) are enriched in acidic residues. 8 residues coordinate Zn(2+): histidine 232, cysteine 251, cysteine 255, cysteine 267, cysteine 269, cysteine 272, cysteine 276, and cysteine 279.

In terms of biological role, blocks host interferon signaling. This Phocidae (true seals) protein is Non-structural protein V (P/V).